Consider the following 255-residue polypeptide: 4-hydroxy-tetrahydrodipicolinate reductase (255 aa).

Residues 9-14 (GFKGKM), Asp-35, 89-91 (GTT), and 115-118 (APNF) each bind NAD(+). His-145 (proton donor/acceptor) is an active-site residue. His-146 is a binding site for (S)-2,3,4,5-tetrahydrodipicolinate. The active-site Proton donor is the Lys-149. A (S)-2,3,4,5-tetrahydrodipicolinate-binding site is contributed by 155–156 (GT).

It belongs to the DapB family.

It is found in the cytoplasm. The catalysed reaction is (S)-2,3,4,5-tetrahydrodipicolinate + NAD(+) + H2O = (2S,4S)-4-hydroxy-2,3,4,5-tetrahydrodipicolinate + NADH + H(+). It carries out the reaction (S)-2,3,4,5-tetrahydrodipicolinate + NADP(+) + H2O = (2S,4S)-4-hydroxy-2,3,4,5-tetrahydrodipicolinate + NADPH + H(+). It participates in amino-acid biosynthesis; L-lysine biosynthesis via DAP pathway; (S)-tetrahydrodipicolinate from L-aspartate: step 4/4. In terms of biological role, catalyzes the conversion of 4-hydroxy-tetrahydrodipicolinate (HTPA) to tetrahydrodipicolinate. In Streptococcus pneumoniae serotype 4 (strain ATCC BAA-334 / TIGR4), this protein is 4-hydroxy-tetrahydrodipicolinate reductase.